The sequence spans 435 residues: 3-phosphoshikimate 1-carboxyvinyltransferase (435 aa).

3 residues coordinate 3-phosphoshikimate: K15, S16, and R20. K15 is a binding site for phosphoenolpyruvate. Phosphoenolpyruvate-binding residues include G96 and R124. Positions 169, 171, 195, 319, and 346 each coordinate 3-phosphoshikimate. Q171 is a binding site for phosphoenolpyruvate. The active-site Proton acceptor is D319. Phosphoenolpyruvate contacts are provided by R350 and R395.

It belongs to the EPSP synthase family. In terms of assembly, monomer.

Its subcellular location is the cytoplasm. The catalysed reaction is 3-phosphoshikimate + phosphoenolpyruvate = 5-O-(1-carboxyvinyl)-3-phosphoshikimate + phosphate. It participates in metabolic intermediate biosynthesis; chorismate biosynthesis; chorismate from D-erythrose 4-phosphate and phosphoenolpyruvate: step 6/7. Catalyzes the transfer of the enolpyruvyl moiety of phosphoenolpyruvate (PEP) to the 5-hydroxyl of shikimate-3-phosphate (S3P) to produce enolpyruvyl shikimate-3-phosphate and inorganic phosphate. The chain is 3-phosphoshikimate 1-carboxyvinyltransferase from Chlorobium phaeobacteroides (strain BS1).